The chain runs to 559 residues: Urocanate hydratase (559 aa).

NAD(+)-binding positions include 53–54, Gln131, 177–179, Glu197, Arg202, 243–244, 264–268, 274–275, and Tyr323; these read GG, GMG, NA, QTSAH, and YL. Residue Cys411 is part of the active site. Gly493 contacts NAD(+).

Belongs to the urocanase family. NAD(+) is required as a cofactor.

The protein localises to the cytoplasm. It catalyses the reaction 4-imidazolone-5-propanoate = trans-urocanate + H2O. The protein operates within amino-acid degradation; L-histidine degradation into L-glutamate; N-formimidoyl-L-glutamate from L-histidine: step 2/3. Catalyzes the conversion of urocanate to 4-imidazolone-5-propionate. In Pseudomonas paraeruginosa (strain DSM 24068 / PA7) (Pseudomonas aeruginosa (strain PA7)), this protein is Urocanate hydratase.